The sequence spans 75 residues: Exodeoxyribonuclease 7 small subunit (75 aa).

It belongs to the XseB family. As to quaternary structure, heterooligomer composed of large and small subunits.

Its subcellular location is the cytoplasm. The enzyme catalyses Exonucleolytic cleavage in either 5'- to 3'- or 3'- to 5'-direction to yield nucleoside 5'-phosphates.. Bidirectionally degrades single-stranded DNA into large acid-insoluble oligonucleotides, which are then degraded further into small acid-soluble oligonucleotides. This Anaplasma phagocytophilum (strain HZ) protein is Exodeoxyribonuclease 7 small subunit.